The sequence spans 2448 residues: Cysteine repeat modular protein 1 (2448 aa).

Residues 9–29 (TSTNLLNIFALYFSAICFIYC) form a helical membrane-spanning segment. N-linked (GlcNAc...) asparagine glycans are attached at residues Asn48, Asn89, Asn248, Asn284, Asn461, Asn503, Asn542, Asn598, and Asn619. 4 FU repeats span residues 431-481 (KNTC…GYYF), 485-530 (FMQC…GFYI), 535-566 (NFKCEKCNASCLSCTGPSFDQCLSCKSGFYLS), and 567-611 (SNTC…GQFA). 10 FU repeats span residues 645–694 (NNQC…GYFP), 698–727 (TSVCQACQGKCKTCTSSNTCSSCINGYYLQ), 728–772 (DSNC…GTFG), 775–813 (QNICQTCIDGCQTCYGPTLLECYSCEQGFFFQAFQITNN), 819–868 (KGMC…YYLS), 904–947 (GRVC…GFPD), 950–983 (QNVCVACHPTCVTCQGPLATDCLTCISGYYLNPA), 984–1027 (NNIC…RTYP), 1063–1109 (QGAC…NQYV), and 1113–1144 (QNRCLPCFYSCSSCFGPNSNQCFSCQPNGFYL). N-linked (GlcNAc...) asparagine glycans are attached at residues Asn761 and Asn812. Asn934 carries N-linked (GlcNAc...) asparagine glycosylation. The N-linked (GlcNAc...) asparagine glycan is linked to Asn1002. The N-linked (GlcNAc...) asparagine glycan is linked to Asn1146. An FU 15 repeat occupies 1147–1193 (QTQCSICDISCLQCSGPGFDSCIQCAQGYYKLGDSVCVQSCPDGFFL). The N-linked (GlcNAc...) asparagine glycan is linked to Asn1194. FU repeat units follow at residues 1197-1232 (NNQCQSCNQVCFNCNGPQNSDCTSCAAGYYQSISNQ), 1234-1279 (GIIC…GYRS), 1281-1332 (KGVC…GTFQ), 1346-1394 (SYYC…GFIL), and 1402-1436 (NQYCKVCKINCVSCIQQFFYYQENCYSSCPVGTVQ). Asn1296, Asn1328, and Asn1365 each carry an N-linked (GlcNAc...) asparagine glycan. Residues Asn1506, Asn1601, Asn1628, and Asn1670 are each glycosylated (N-linked (GlcNAc...) asparagine). An EGF-like domain is found at 1739–1773 (SDISCSLNLCMNSGKCVPNSIFCSCPSAFTGPKCQ). 3 disulfide bridges follow: Cys1743-Cys1754, Cys1748-Cys1761, and Cys1763-Cys1772. N-linked (GlcNAc...) asparagine glycans are attached at residues Asn1800, Asn1849, Asn1877, Asn1942, Asn2117, Asn2155, and Asn2179. The next 2 helical transmembrane spans lie at 2201–2221 (LYIMIIISLGIGAAFLGYSAI) and 2238–2258 (IYFLYYFPIISFLVGPTNQFV). N-linked (GlcNAc...) asparagine glycosylation occurs at Asn2260. 4 helical membrane passes run 2267 to 2287 (SLTIIASHFAFSSIYVQILPF), 2296 to 2316 (ILTSIITVSSTSVCIYWTIGV), 2352 to 2372 (MIGLVLAVLALISISVFIGLC), and 2386 to 2406 (AVFLIDLIADAIVVFILIIVG).

It is found in the membrane. Required for mucocyst secretion. This chain is Cysteine repeat modular protein 1, found in Tetrahymena thermophila (strain SB210).